The chain runs to 206 residues: Small ribosomal subunit protein uS4 (206 aa).

An S4 RNA-binding domain is found at 94–156; sequence RRLDNVVYRL…SRRRMYFKNL (63 aa).

It belongs to the universal ribosomal protein uS4 family. In terms of assembly, part of the 30S ribosomal subunit. Contacts protein S5. The interaction surface between S4 and S5 is involved in control of translational fidelity.

Its function is as follows. One of the primary rRNA binding proteins, it binds directly to 16S rRNA where it nucleates assembly of the body of the 30S subunit. Functionally, with S5 and S12 plays an important role in translational accuracy. In Roseiflexus castenholzii (strain DSM 13941 / HLO8), this protein is Small ribosomal subunit protein uS4.